Reading from the N-terminus, the 410-residue chain is Putative ribonuclease E (410 aa).

Positions 39–119 (SNIYKGKIVR…GTKGALLTTF (81 aa)) constitute an S1 motif domain. Residues Asp303 and Asp346 each coordinate Mg(2+).

This sequence belongs to the RNase E/G family. RNase E subfamily. In terms of assembly, component of the RNA degradosome, which is a multiprotein complex involved in RNA processing and mRNA degradation. Within the RNA degradosome, RNase E assembles into a homotetramer formed by a dimer of dimers. Requires Mg(2+) as cofactor.

The protein localises to the cytoplasm. The protein resides in the cell inner membrane. It catalyses the reaction Endonucleolytic cleavage of single-stranded RNA in A- and U-rich regions.. Functionally, endoribonuclease that plays a central role in RNA processing and decay. Required for the maturation of 5S and 16S rRNAs and the majority of tRNAs. Also involved in the degradation of most mRNAs. The protein is Putative ribonuclease E (rne) of Buchnera aphidicola subsp. Baizongia pistaciae (strain Bp).